A 381-amino-acid chain; its full sequence is 40-kDa huntingtin-associated protein (381 aa).

A2 is subject to N-acetylalanine. The short motif at 34 to 36 (KKR) is the Nuclear localization signal element. Positions 213-260 (EHGGHPVQQPELPQQLPSVPQPSLPGPQPRPVLGSTLPLPLPPDHAPG) are disordered. The span at 218-230 (PVQQPELPQQLPS) shows a compositional bias: low complexity. Residues 231 to 242 (VPQPSLPGPQPR) are compositionally biased toward pro residues.

As to quaternary structure, interacts with HTT (via C-terminus). Interacts with RAB5A. Found in a complex with F8A1/F8A2/F8A3, HTT and RAB5A; mediates the recruitment of HTT by RAB5A onto early endosomes.

Its subcellular location is the cytoplasm. The protein resides in the nucleus. It is found in the early endosome. The protein localises to the nuclear body. In terms of biological role, RAB5A effector molecule that is involved in vesicular trafficking of early endosomes. Mediates the recruitment of HTT by RAB5A onto early endosomes. The HTT-F8A1/F8A2/F8A3-RAB5A complex stimulates early endosomal interaction with actin filaments and inhibits interaction with microtubules, leading to the reduction of endosome motility. The polypeptide is 40-kDa huntingtin-associated protein (F8a1) (Rattus norvegicus (Rat)).